We begin with the raw amino-acid sequence, 346 residues long: 4-hydroxy-3-methylbut-2-enyl diphosphate reductase (346 aa).

Cysteine 19 provides a ligand contact to [4Fe-4S] cluster. Positions 48 and 84 each coordinate (2E)-4-hydroxy-3-methylbut-2-enyl diphosphate. Histidine 48 and histidine 84 together coordinate dimethylallyl diphosphate. Residues histidine 48 and histidine 84 each contribute to the isopentenyl diphosphate site. Cysteine 106 serves as a coordination point for [4Fe-4S] cluster. Residue histidine 134 coordinates (2E)-4-hydroxy-3-methylbut-2-enyl diphosphate. Histidine 134 is a binding site for dimethylallyl diphosphate. Residue histidine 134 coordinates isopentenyl diphosphate. Glutamate 136 functions as the Proton donor in the catalytic mechanism. Threonine 175 serves as a coordination point for (2E)-4-hydroxy-3-methylbut-2-enyl diphosphate. Residue cysteine 205 participates in [4Fe-4S] cluster binding. Residues serine 233, serine 234, asparagine 235, and serine 278 each coordinate (2E)-4-hydroxy-3-methylbut-2-enyl diphosphate. Serine 233, serine 234, asparagine 235, and serine 278 together coordinate dimethylallyl diphosphate. Isopentenyl diphosphate-binding residues include serine 233, serine 234, asparagine 235, and serine 278.

It belongs to the IspH family. [4Fe-4S] cluster serves as cofactor.

The catalysed reaction is isopentenyl diphosphate + 2 oxidized [2Fe-2S]-[ferredoxin] + H2O = (2E)-4-hydroxy-3-methylbut-2-enyl diphosphate + 2 reduced [2Fe-2S]-[ferredoxin] + 2 H(+). It carries out the reaction dimethylallyl diphosphate + 2 oxidized [2Fe-2S]-[ferredoxin] + H2O = (2E)-4-hydroxy-3-methylbut-2-enyl diphosphate + 2 reduced [2Fe-2S]-[ferredoxin] + 2 H(+). It participates in isoprenoid biosynthesis; dimethylallyl diphosphate biosynthesis; dimethylallyl diphosphate from (2E)-4-hydroxy-3-methylbutenyl diphosphate: step 1/1. Its pathway is isoprenoid biosynthesis; isopentenyl diphosphate biosynthesis via DXP pathway; isopentenyl diphosphate from 1-deoxy-D-xylulose 5-phosphate: step 6/6. Its function is as follows. Catalyzes the conversion of 1-hydroxy-2-methyl-2-(E)-butenyl 4-diphosphate (HMBPP) into a mixture of isopentenyl diphosphate (IPP) and dimethylallyl diphosphate (DMAPP). Acts in the terminal step of the DOXP/MEP pathway for isoprenoid precursor biosynthesis. This Brucella abortus (strain S19) protein is 4-hydroxy-3-methylbut-2-enyl diphosphate reductase.